A 423-amino-acid chain; its full sequence is MERLTSPPRLMIVSDLDETMVDHHKDPENLALLRFNSLWEDAYRHDSLLVFSTGRAQTMYKKLRKEKPLLTPDVIITSVGTEIAYGNSMVPDDNWVEILNKKWDRGIVQEETSKFPELTLQGETEQRPHKLSFNIDKSKVKAVTKELSPRLEKRGVDVKFIFSGGNAFDVLAKGGGKGQALAYLLKKLKTEGKLPINTLACGDSGNDTELFTIPNVYGVMVSNAQEELLEWYAENAKDNANIIHASERCAGGITQAIGHFKLGPNLSPRDVSDFLECKADNVNPGHEVVKFFLFYERWRRGEVENCTTYTSSLKASCHPSGVFVHPSGAEKSLRDTIDELGKYYGDKKGKKFRVWTDQVLATDTTPGTWIVKLDKWEQTGDERKCCTTTVKFTSKEGEGFVWEHVQQIWSEETEIKDDSNWII.

It belongs to the sucrose phosphatase family. Homodimer. Requires Mg(2+) as cofactor.

The catalysed reaction is sucrose 6(F)-phosphate + H2O = sucrose + phosphate. The protein operates within glycan biosynthesis; sucrose biosynthesis; sucrose from D-fructose 6-phosphate and UDP-alpha-D-glucose: step 2/2. In terms of biological role, catalyzes the final step of sucrose synthesis. This Arabidopsis thaliana (Mouse-ear cress) protein is Probable sucrose-phosphatase 1 (SPP1).